The primary structure comprises 141 residues: Transmembrane protein 216 (141 aa).

The next 4 helical transmembrane spans lie at 15 to 35, 49 to 69, 82 to 102, and 115 to 135; these read ILFF…LLIF, LVLD…RLFF, LGIS…YLLL, and SILL…LATF.

As to quaternary structure, part of the tectonic-like complex (also named B9 complex). Interacts with TMEM107.

Its subcellular location is the membrane. It localises to the cytoplasm. The protein localises to the cytoskeleton. It is found in the cilium basal body. Functionally, part of the tectonic-like complex which is required for tissue-specific ciliogenesis and may regulate ciliary membrane composition. In Rattus norvegicus (Rat), this protein is Transmembrane protein 216 (Tmem216).